The primary structure comprises 311 residues: Pantothenate kinase (311 aa).

93 to 100 is a binding site for ATP; it reads GSVAVGKS.

Belongs to the prokaryotic pantothenate kinase family.

The protein resides in the cytoplasm. It catalyses the reaction (R)-pantothenate + ATP = (R)-4'-phosphopantothenate + ADP + H(+). It participates in cofactor biosynthesis; coenzyme A biosynthesis; CoA from (R)-pantothenate: step 1/5. In Haemophilus influenzae (strain ATCC 51907 / DSM 11121 / KW20 / Rd), this protein is Pantothenate kinase (coaA).